The chain runs to 198 residues: Na(+)-translocating NADH-quinone reductase subunit E (198 aa).

6 helical membrane-spanning segments follow: residues 11–31, 39–59, 77–97, 110–130, 140–160, and 176–196; these read SIFI…FLAV, MGLG…NNLI, FLSF…LEMA, GIFL…SFMV, VVYG…MAGI, and LGIT…FSGI.

Belongs to the NqrDE/RnfAE family. In terms of assembly, composed of six subunits; NqrA, NqrB, NqrC, NqrD, NqrE and NqrF.

It localises to the cell inner membrane. It carries out the reaction a ubiquinone + n Na(+)(in) + NADH + H(+) = a ubiquinol + n Na(+)(out) + NAD(+). In terms of biological role, NQR complex catalyzes the reduction of ubiquinone-1 to ubiquinol by two successive reactions, coupled with the transport of Na(+) ions from the cytoplasm to the periplasm. NqrA to NqrE are probably involved in the second step, the conversion of ubisemiquinone to ubiquinol. The protein is Na(+)-translocating NADH-quinone reductase subunit E of Aeromonas hydrophila subsp. hydrophila (strain ATCC 7966 / DSM 30187 / BCRC 13018 / CCUG 14551 / JCM 1027 / KCTC 2358 / NCIMB 9240 / NCTC 8049).